The primary structure comprises 479 residues: Glutamate--tRNA ligase (479 aa).

Residues proline 9–threonine 19 carry the 'HIGH' region motif. A 'KMSKS' region motif is present at residues lysine 243–arginine 247. Residue lysine 246 participates in ATP binding.

This sequence belongs to the class-I aminoacyl-tRNA synthetase family. Glutamate--tRNA ligase type 1 subfamily. Monomer.

It is found in the cytoplasm. It catalyses the reaction tRNA(Glu) + L-glutamate + ATP = L-glutamyl-tRNA(Glu) + AMP + diphosphate. In terms of biological role, catalyzes the attachment of glutamate to tRNA(Glu) in a two-step reaction: glutamate is first activated by ATP to form Glu-AMP and then transferred to the acceptor end of tRNA(Glu). The protein is Glutamate--tRNA ligase of Synechococcus sp. (strain JA-2-3B'a(2-13)) (Cyanobacteria bacterium Yellowstone B-Prime).